Here is a 71-residue protein sequence, read N- to C-terminus: Small ribosomal subunit protein bS21 (71 aa).

The segment at 43-71 (TERKRAKASAVKRHAKKLARENARRTRLY) is disordered. Residues 46 to 59 (KRAKASAVKRHAKK) are compositionally biased toward basic residues. The span at 60–71 (LARENARRTRLY) shows a compositional bias: basic and acidic residues.

It belongs to the bacterial ribosomal protein bS21 family.

The sequence is that of Small ribosomal subunit protein bS21 from Pectobacterium atrosepticum (strain SCRI 1043 / ATCC BAA-672) (Erwinia carotovora subsp. atroseptica).